The primary structure comprises 102 residues: Small ribosomal subunit protein uS10 (102 aa).

Belongs to the universal ribosomal protein uS10 family. In terms of assembly, part of the 30S ribosomal subunit.

In terms of biological role, involved in the binding of tRNA to the ribosomes. The polypeptide is Small ribosomal subunit protein uS10 (Limosilactobacillus reuteri (strain DSM 20016) (Lactobacillus reuteri)).